The primary structure comprises 534 residues: Protein tweety homolog 2 (534 aa).

Residues 1-44 (MQAARVDYIAPWWVVWLHSVPHVGLRLQPVNSTFSPGDESYQES) are Extracellular-facing. N-linked (GlcNAc...) asparagine glycosylation is present at Asn31. The helical transmembrane segment at 45 to 65 (LLFLGLVAAVCLGLNLIFLVA) threads the bilayer. The Cytoplasmic segment spans residues 66–87 (YLVCACHCRRDDAVQTKQHHSC). A helical transmembrane segment spans residues 88–108 (CITWTAVVAGLICCAAVGVGF). The Extracellular segment spans residues 109–213 (YGNSETNDGA…QTGYVEYYRW (105 aa)). Positions 113 and 116 each coordinate Ca(2+). Asn129 is a glycosylation site (N-linked (GlcNAc) asparagine). The RGD motif lies at 164 to 166 (RGD). At Thr199 the chain carries Phosphothreonine. A helical transmembrane segment spans residues 214-234 (LSYLLLFILDLVICLIACLGL). Residues 235–240 (AKRSKC) are Cytoplasmic-facing. The helical transmembrane segment at 241–261 (LLASMLCCGALSLLLSWASLA) threads the bilayer. Residues 262-388 (ADGSAAVATS…AGICYDGLQG (127 aa)) lie on the Extracellular side of the membrane. 2 disulfides stabilise this stretch: Cys274–Cys382 and Cys300–Cys367. A glycan (N-linked (GlcNAc...) asparagine) is linked at Asn283. Residue Asn352 is glycosylated (N-linked (GlcNAc) asparagine). A helical transmembrane segment spans residues 389–409 (LLYLGLFSFLAALAFSTMICA). Residues 410 to 534 (GPRAWKHFTT…LRHYGNQFPA (125 aa)) are Cytoplasmic-facing. Ser504 carries the post-translational modification Phosphoserine. Residues 506-509 (PPTY) carry the PY-motif; mediates interaction with NEDD4L motif.

The protein belongs to the tweety family. In terms of assembly, homodimer. Forms cis-homodimers in the presence of Ca(+2) and forms monomers and trans-dimers in the absence of Ca(2+). Interacts with NEDD4L. Post-translationally, N- Glycosylated. Contains high-mannose, hybrid and complex oligosaccharides. Ubiquitinated by NEDD4L, leading to its proteasomal degradation. In terms of tissue distribution, expressed at higher level in brain and testis and at lower levels in heart, ovary, spleen and peripheral blood leukocytes. Up-regulated in 13 of 16 renal cell carcinoma samples examined. Up-regulated in colon carcinoma.

Its subcellular location is the cell membrane. The catalysed reaction is chloride(in) = chloride(out). It carries out the reaction L-glutamate(out) = L-glutamate(in). Functionally, calcium-independent, swelling-dependent volume-regulated anion channel (VRAC-swell) which plays a pivotal role in the process of regulatory volume decrease (RVD) in the brain through the efflux of anions like chloride and organic osmolytes like glutamate. Probable large-conductance Ca(2+)-activated chloride channel. This is Protein tweety homolog 2 (TTYH2) from Homo sapiens (Human).